The sequence spans 469 residues: Protein YfjI (469 aa).

In Escherichia coli (strain K12), this protein is Protein YfjI (yfjI).